Here is an 825-residue protein sequence, read N- to C-terminus: Exocyst complex component SEC10a (825 aa).

Positions 244–266 (RGLEVAVANLQDYCNELENRLLS) form a coiled coil.

The protein belongs to the SEC10 family. The exocyst complex is composed of SEC3, SEC5, SEC6, SEC8, SEC10, EXO70A1 and EXO84B. Interacts with EXO84B. Binds to EXO70E2. Binds directly to B1L. As to expression, expressed in seedlings, roots, leaves and flowers.

Its subcellular location is the cytoplasm. It is found in the cytosol. The protein localises to the secreted. The protein resides in the extracellular exosome. In terms of biological role, component of the exocyst complex involved in the docking of exocytic vesicles with fusion sites on the plasma membrane during regulated or polarized secretion. Involved in polarized cell growth and organ morphogenesis. During cytokinesis, involved in cell plate initiation, cell plate maturation and formation of new primary cell wall. This is Exocyst complex component SEC10a from Arabidopsis thaliana (Mouse-ear cress).